The chain runs to 394 residues: 1-deoxy-D-xylulose 5-phosphate reductoisomerase (394 aa).

NADPH contacts are provided by threonine 14, glycine 15, serine 16, isoleucine 17, glycine 40, asparagine 43, and asparagine 130. Lysine 131 is a binding site for 1-deoxy-D-xylulose 5-phosphate. Position 132 (glutamate 132) interacts with NADPH. Aspartate 154 lines the Mn(2+) pocket. The 1-deoxy-D-xylulose 5-phosphate site is built by serine 155, glutamate 156, serine 180, and histidine 203. Glutamate 156 is a binding site for Mn(2+). Glycine 209 lines the NADPH pocket. 1-deoxy-D-xylulose 5-phosphate is bound by residues serine 216, asparagine 221, lysine 222, and glutamate 225. Glutamate 225 contacts Mn(2+).

The protein belongs to the DXR family. Requires Mg(2+) as cofactor. Mn(2+) serves as cofactor.

It carries out the reaction 2-C-methyl-D-erythritol 4-phosphate + NADP(+) = 1-deoxy-D-xylulose 5-phosphate + NADPH + H(+). The protein operates within isoprenoid biosynthesis; isopentenyl diphosphate biosynthesis via DXP pathway; isopentenyl diphosphate from 1-deoxy-D-xylulose 5-phosphate: step 1/6. Its function is as follows. Catalyzes the NADPH-dependent rearrangement and reduction of 1-deoxy-D-xylulose-5-phosphate (DXP) to 2-C-methyl-D-erythritol 4-phosphate (MEP). This chain is 1-deoxy-D-xylulose 5-phosphate reductoisomerase, found in Corynebacterium efficiens (strain DSM 44549 / YS-314 / AJ 12310 / JCM 11189 / NBRC 100395).